The sequence spans 501 residues: Cystine/glutamate transporter (501 aa).

Topologically, residues 1 to 43 are cytoplasmic; it reads MVRKPVVSTISKGGYLQGNVNGRLPSLGNKEPPGQEKVQLKRK. At Ser-26 the chain carries Phosphoserine. The chain crosses the membrane as a helical span at residues 44-64; that stretch reads VTLLRGVSIIIGTIIGAGIFI. At 65-74 the chain is on the extracellular side; that stretch reads SPKGVLQNTG. The chain crosses the membrane as a helical span at residues 75 to 95; sequence SVGMSLTIWTVCGVLSLFGAL. Over 96–101 the chain is Cytoplasmic; sequence SYAELG. Residues 102-116 lie within the membrane without spanning it; that stretch reads TTIKKSGGHYTYILE. Over 117-130 the chain is Cytoplasmic; it reads VFGPLPAFVRVWVE. The helical transmembrane segment at 131–150 threads the bilayer; it reads LLIIRPAATAVISLAFGRYI. Arg-135 lines the L-glutamate pocket. At 151–163 the chain is on the extracellular side; that stretch reads LEPFFIQCEIPEL. A helical transmembrane segment spans residues 164–179; sequence AIKLITAVGITVVMVL. Topologically, residues 180 to 193 are cytoplasmic; it reads NSMSVSWSARIQIF. Residues 194–210 traverse the membrane as a helical segment; that stretch reads LTFCKLTAILIIIVPGV. Topologically, residues 211–234 are extracellular; it reads MQLIKGQTQNFKDAFSGRDSSITR. The helical transmembrane segment at 235–255 threads the bilayer; it reads LPLAFYYGMYAYAGWFYLNFV. Tyr-244 lines the L-glutamate pocket. The Cytoplasmic portion of the chain corresponds to 256-265; sequence TEEVENPEKT. The helical transmembrane segment at 266–286 threads the bilayer; it reads IPLAICISMAIVTIGYVLTNV. The Extracellular segment spans residues 287-317; that stretch reads AYFTTINAEELLLSNAVAVTFSERLLGNFSL. N-linked (GlcNAc...) asparagine glycosylation is present at Asn-314. A helical membrane pass occupies residues 318–338; it reads AVPIFVALSCFGSMNGGVFAV. The Cytoplasmic portion of the chain corresponds to 339–364; sequence SRLFYVASREGHLPEILSMIHVRKHT. The helical transmembrane segment at 365–385 threads the bilayer; sequence PLPAVIVLHPLTMIMLFSGDL. At 386–387 the chain is on the extracellular side; that stretch reads DS. The helical transmembrane segment at 388–408 threads the bilayer; it reads LLNFLSFARWLFIGLAVAGLI. Over 409-422 the chain is Cytoplasmic; that stretch reads YLRYKCPDMHRPFK. A helical membrane pass occupies residues 423–443; that stretch reads VPLFIPALFSFTCLFMVALSL. Residues 444–449 are Extracellular-facing; that stretch reads YSDPFS. A helical membrane pass occupies residues 450–470; sequence TGIGSVITLTGVPAYYLFIIW. Over 471–501 the chain is Cytoplasmic; that stretch reads DKKPRWFRIMSEKITRTLQIILEVVPEEDKL.

This sequence belongs to the amino acid-polyamine-organocation (APC) superfamily. L-type amino acid transporter (LAT) (TC 2.A.3.8) family. In terms of assembly, disulfide-linked heterodimer with the amino acid transport protein SLC3A2/4F2hc; this interaction mediates cell membrane localization.

The protein resides in the cell membrane. The protein localises to the cell projection. Its subcellular location is the microvillus membrane. The enzyme catalyses L-cystine(out) + L-glutamate(in) = L-cystine(in) + L-glutamate(out). It carries out the reaction an L-alpha-amino acid(in) + L-kynurenine(out) = an L-alpha-amino acid(out) + L-kynurenine(in). The catalysed reaction is N-acetyl-L-cysteine(out) + L-glutamate(in) = N-acetyl-L-cysteine(in) + L-glutamate(out). In terms of biological role, heterodimer with SLC3A2, that functions as an antiporter by mediating the exchange of extracellular anionic L-cystine and intracellular L-glutamate across the cellular plasma membrane. Provides L-cystine for the maintenance of the redox balance between extracellular L-cystine and L-cysteine and for the maintenance of the intracellular levels of glutathione that is essential for cells protection from oxidative stress. The transport is sodium-independent, electroneutral with a stoichiometry of 1:1, and is drove by the high intracellular concentration of L-glutamate and the intracellular reduction of L-cystine. In addition, mediates the import of L-kynurenine leading to anti-ferroptotic signaling propagation required to maintain L-cystine and glutathione homeostasis. Moreover, mediates N-acetyl-L-cysteine uptake into the placenta leading to subsequently down-regulation of pathways associated with oxidative stress, inflammation and apoptosis. In vitro can also transport L-aspartate. May participate in astrocyte and meningeal cell proliferation during development and can provide neuroprotection by promoting glutathione synthesis and delivery from non-neuronal cells such as astrocytes and meningeal cells to immature neurons. Controls the production of pheomelanin pigment directly. This is Cystine/glutamate transporter from Pongo abelii (Sumatran orangutan).